The sequence spans 556 residues: Dihydroxy-acid dehydratase (556 aa).

Cys47 serves as a coordination point for [2Fe-2S] cluster. A Mg(2+)-binding site is contributed by Asp79. A [2Fe-2S] cluster-binding site is contributed by Cys120. Mg(2+) is bound by residues Asp121 and Lys122. The residue at position 122 (Lys122) is an N6-carboxylysine. Residue Cys192 participates in [2Fe-2S] cluster binding. Glu444 is a Mg(2+) binding site. The active-site Proton acceptor is the Ser470.

Belongs to the IlvD/Edd family. Homodimer. [2Fe-2S] cluster is required as a cofactor. The cofactor is Mg(2+).

The enzyme catalyses (2R)-2,3-dihydroxy-3-methylbutanoate = 3-methyl-2-oxobutanoate + H2O. It carries out the reaction (2R,3R)-2,3-dihydroxy-3-methylpentanoate = (S)-3-methyl-2-oxopentanoate + H2O. It functions in the pathway amino-acid biosynthesis; L-isoleucine biosynthesis; L-isoleucine from 2-oxobutanoate: step 3/4. The protein operates within amino-acid biosynthesis; L-valine biosynthesis; L-valine from pyruvate: step 3/4. Functions in the biosynthesis of branched-chain amino acids. Catalyzes the dehydration of (2R,3R)-2,3-dihydroxy-3-methylpentanoate (2,3-dihydroxy-3-methylvalerate) into 2-oxo-3-methylpentanoate (2-oxo-3-methylvalerate) and of (2R)-2,3-dihydroxy-3-methylbutanoate (2,3-dihydroxyisovalerate) into 2-oxo-3-methylbutanoate (2-oxoisovalerate), the penultimate precursor to L-isoleucine and L-valine, respectively. This Prochlorococcus marinus (strain NATL2A) protein is Dihydroxy-acid dehydratase.